We begin with the raw amino-acid sequence, 287 residues long: Universal stress protein Slr1230 (287 aa).

Belongs to the universal stress protein A family.

The chain is Universal stress protein Slr1230 from Synechocystis sp. (strain ATCC 27184 / PCC 6803 / Kazusa).